A 95-amino-acid polypeptide reads, in one-letter code: MKICGPKLSLCGLIISVWGIIQLVLMGLFFYINSVALIEDLPIDEEFNSVEEFYTAATSAYNQNAYNCWIAACIYVLTLLLSAQQFYVNSRATAN.

Helical transmembrane passes span 12-32 and 68-88; these read GLIISVWGIIQLVLMGLFFYI and CWIAACIYVLTLLLSAQQFYV.

The protein belongs to the RNase K family.

The protein resides in the membrane. Inhibited by Zn(2+) and Hg(2+), while it is unaffected by Ca(2+). Its function is as follows. Endoribonuclease which displays activity against poly(C) and poly(U) synthetic substrates, as well as rRNA. This Ceratitis capitata (Mediterranean fruit fly) protein is Ribonuclease kappa-B.